Reading from the N-terminus, the 369-residue chain is MSKHYYIGLMSGTSMDGVDAVLVDFSDDKITLVDTHTEPLPSHLLSGLQRLCQSGSDEINRMGILDRSVGKLFAQAVEGLLTKSGVDRHQIMAIGSHGQTVRHMPNLELGFTLQIGDPNTIAALTGIDVIADFRRKDIALGGQGAPLVPAFHQQLFARTGHQRMILNIGGISNITYLPGDASAVIGFDNGPGNTLIDTWIKQVQGEAYDKDGAWAASGKTDEQLLKQMLSHSYFSLSAPKSTGRELFNQAWLEQQTSDFGYLHESDIQSTLLDLTCHSIANDCLKLTEKAELYVCGGGAFNTELLTRLAALLPGYQVHTTASLGVDPQWVEGIAFAWLAMRHKLGLPGNLPAVTGASRETVLGGLFPGN.

12–19 (GTSMDGVD) contacts ATP.

This sequence belongs to the anhydro-N-acetylmuramic acid kinase family.

It carries out the reaction 1,6-anhydro-N-acetyl-beta-muramate + ATP + H2O = N-acetyl-D-muramate 6-phosphate + ADP + H(+). It participates in amino-sugar metabolism; 1,6-anhydro-N-acetylmuramate degradation. Its pathway is cell wall biogenesis; peptidoglycan recycling. In terms of biological role, catalyzes the specific phosphorylation of 1,6-anhydro-N-acetylmuramic acid (anhMurNAc) with the simultaneous cleavage of the 1,6-anhydro ring, generating MurNAc-6-P. Is required for the utilization of anhMurNAc either imported from the medium or derived from its own cell wall murein, and thus plays a role in cell wall recycling. The sequence is that of Anhydro-N-acetylmuramic acid kinase from Shewanella loihica (strain ATCC BAA-1088 / PV-4).